A 279-amino-acid polypeptide reads, in one-letter code: Alcohol dehydrogenase-related 31 kDa protein (279 aa).

Residue 11–34 (YVADCGGIALETSKVLMTKNIAKL) participates in NAD(+) binding. Residue serine 139 coordinates substrate. Catalysis depends on tyrosine 152, which acts as the Proton acceptor.

The protein belongs to the short-chain dehydrogenases/reductases (SDR) family.

The protein is Alcohol dehydrogenase-related 31 kDa protein (Adhr) of Drosophila guanche (Fruit fly).